The sequence spans 185 residues: Ribosome-recycling factor (185 aa).

Belongs to the RRF family.

It is found in the cytoplasm. Functionally, responsible for the release of ribosomes from messenger RNA at the termination of protein biosynthesis. May increase the efficiency of translation by recycling ribosomes from one round of translation to another. In Hydrogenovibrio crunogenus (strain DSM 25203 / XCL-2) (Thiomicrospira crunogena), this protein is Ribosome-recycling factor.